The chain runs to 1356 residues: Vegetative incompatibility protein HET-E-1 (1356 aa).

The region spanning 294 to 629 is the NACHT domain; it reads RLLWINGDPG…DFLLGTASDK (336 aa). 300 to 307 serves as a coordination point for GTP; it reads GDPGKGKT. WD repeat units lie at residues 839 to 869, 881 to 911, 923 to 953, 965 to 995, 1007 to 1037, 1049 to 1079, 1091 to 1121, 1133 to 1163, 1175 to 1205, and 1217 to 1247; these read GHGS…KIWD, GHGG…KIWD, and GHGD…KIWD.

In terms of biological role, responsible for vegetative incompatibility through specific interactions with different alleles of the unlinked gene, het-c. The protein is Vegetative incompatibility protein HET-E-1 (HET-E1) of Podospora anserina (Pleurage anserina).